The sequence spans 307 residues: Olfactory receptor 13G1 (307 aa).

The Extracellular segment spans residues M1–G22. N-linked (GlcNAc...) asparagine glycosylation is present at N2. Residues I23 to I43 traverse the membrane as a helical segment. Topologically, residues I44 to T51 are cytoplasmic. A helical transmembrane segment spans residues L52–T72. The Extracellular segment spans residues S73–S96. The cysteines at positions 94 and 186 are disulfide-linked. A helical membrane pass occupies residues Q97–Y117. The Cytoplasmic segment spans residues D118 to H136. A helical transmembrane segment spans residues M137–T157. At A158–V194 the chain is on the extracellular side. The chain crosses the membrane as a helical span at residues M195–S214. At Y215–A234 the chain is on the cytoplasmic side. Residues F235–T255 traverse the membrane as a helical segment. The Extracellular segment spans residues Y256 to D268. Residues K269 to F289 traverse the membrane as a helical segment. Residues Q290–H307 lie on the Cytoplasmic side of the membrane.

Belongs to the G-protein coupled receptor 1 family.

Its subcellular location is the cell membrane. In terms of biological role, odorant receptor. This is Olfactory receptor 13G1 (OR13G1) from Homo sapiens (Human).